An 886-amino-acid polypeptide reads, in one-letter code: Alanine--tRNA ligase (886 aa).

Zn(2+)-binding residues include H570, H574, C673, and H677.

Belongs to the class-II aminoacyl-tRNA synthetase family. Zn(2+) is required as a cofactor.

The protein localises to the cytoplasm. It carries out the reaction tRNA(Ala) + L-alanine + ATP = L-alanyl-tRNA(Ala) + AMP + diphosphate. Functionally, catalyzes the attachment of alanine to tRNA(Ala) in a two-step reaction: alanine is first activated by ATP to form Ala-AMP and then transferred to the acceptor end of tRNA(Ala). Also edits incorrectly charged Ser-tRNA(Ala) and Gly-tRNA(Ala) via its editing domain. In Chlorobium chlorochromatii (strain CaD3), this protein is Alanine--tRNA ligase.